The primary structure comprises 357 residues: UPF0283 membrane protein BOV_0999 (357 aa).

Residues 1-36 (MSDKTPRKPTAFRLEQPARVSAASEQEEPRRPRAVK) are disordered. The span at 27–36 (EEPRRPRAVK) shows a compositional bias: basic and acidic residues. 2 helical membrane-spanning segments follow: residues 78–98 (ILFG…TEDL) and 109–129 (LGWT…AIIL).

The protein belongs to the UPF0283 family.

It is found in the cell inner membrane. The chain is UPF0283 membrane protein BOV_0999 from Brucella ovis (strain ATCC 25840 / 63/290 / NCTC 10512).